A 421-amino-acid chain; its full sequence is Zinc chaperone AztD (421 aa).

The N-terminal stretch at 1–29 is a signal peptide; sequence MMENIMKKRLLSTSISTLLLGLSVMPAFA. Positions 101, 104, 106, 126, 169, 216, and 405 each coordinate Zn(2+). An intrachain disulfide couples Cys212 to Cys229. Residues 399–421 form a disordered region; that stretch reads GGSGKVHGEHHDHEAHHHDDHAH. Residues 404-421 show a composition bias toward basic and acidic residues; it reads VHGEHHDHEAHHHDDHAH. Residues 408-419 carry the N-terminal Zn(2+)-binding motif; binds a third Zn(2+) with low affinity motif; it reads HHDHEAHHHDDH.

Monomer.

The protein resides in the periplasm. Its function is as follows. Acts as a zinc chaperone in the AztABCD zinc transport system. Directly transfers one zinc cation to the solute binding protein AztC; the transfer occurs without the formation of a stable interaction. Binds 3 Zn(2+), two with high affinity and one with low affinity, and transfers only Zn(2+) bound to site 2 to AztC. This chain is Zinc chaperone AztD, found in Citrobacter koseri (strain ATCC BAA-895 / CDC 4225-83 / SGSC4696).